The chain runs to 171 residues: Minor capsid protein 3 (171 aa).

In terms of assembly, interacts with the major capsid protein.

The protein resides in the virion. In terms of biological role, one of the minor capsid proteins that constitute a network internal to the major capsid proteins and outside the lipid membrane. The minor capsid proteins glue and stabilize the capsomers. The polypeptide is Minor capsid protein 3 (Chlorella (PBCV-1)).